The chain runs to 754 residues: 5-methyltetrahydropteroyltriglutamate--homocysteine methyltransferase (754 aa).

Residues 15–18 (RELK) and Lys114 each bind 5-methyltetrahydropteroyltri-L-glutamate. L-homocysteine-binding positions include 430–432 (IGS) and Glu483. Residues 430–432 (IGS) and Glu483 contribute to the L-methionine site. Residues 514-515 (RC) and Trp560 contribute to the 5-methyltetrahydropteroyltri-L-glutamate site. Asp598 is an L-homocysteine binding site. Asp598 is an L-methionine binding site. Residue Glu604 participates in 5-methyltetrahydropteroyltri-L-glutamate binding. Residues His641, Cys643, and Glu665 each coordinate Zn(2+). Catalysis depends on His694, which acts as the Proton donor. Zn(2+) is bound at residue Cys726.

Belongs to the vitamin-B12 independent methionine synthase family. It depends on Zn(2+) as a cofactor.

The enzyme catalyses 5-methyltetrahydropteroyltri-L-glutamate + L-homocysteine = tetrahydropteroyltri-L-glutamate + L-methionine. It participates in amino-acid biosynthesis; L-methionine biosynthesis via de novo pathway; L-methionine from L-homocysteine (MetE route): step 1/1. Catalyzes the transfer of a methyl group from 5-methyltetrahydrofolate to homocysteine resulting in methionine formation. This chain is 5-methyltetrahydropteroyltriglutamate--homocysteine methyltransferase, found in Campylobacter jejuni subsp. jejuni serotype O:23/36 (strain 81-176).